The sequence spans 293 residues: Pantothenate synthetase (293 aa).

30 to 37 (MGYLHKGH) provides a ligand contact to ATP. The active-site Proton donor is histidine 37. Residue glutamine 61 participates in (R)-pantoate binding. Glutamine 61 is a beta-alanine binding site. 147 to 150 (GEKD) is a binding site for ATP. Glutamine 153 contacts (R)-pantoate. ATP-binding positions include valine 176 and 184–187 (CSSR).

This sequence belongs to the pantothenate synthetase family. Homodimer.

The protein localises to the cytoplasm. The catalysed reaction is (R)-pantoate + beta-alanine + ATP = (R)-pantothenate + AMP + diphosphate + H(+). Its pathway is cofactor biosynthesis; (R)-pantothenate biosynthesis; (R)-pantothenate from (R)-pantoate and beta-alanine: step 1/1. In terms of biological role, catalyzes the condensation of pantoate with beta-alanine in an ATP-dependent reaction via a pantoyl-adenylate intermediate. The chain is Pantothenate synthetase from Brucella abortus (strain S19).